Reading from the N-terminus, the 334-residue chain is Eukaryotic translation initiation factor 3 subunit H (334 aa).

Residues 20 to 152 (VQCDGLAAMK…LKAYRLTPQA (133 aa)) enclose the MPN domain.

This sequence belongs to the eIF-3 subunit H family. As to quaternary structure, component of the eukaryotic translation initiation factor 3 (eIF-3) complex.

The protein localises to the cytoplasm. In terms of biological role, component of the eukaryotic translation initiation factor 3 (eIF-3) complex, which is involved in protein synthesis of a specialized repertoire of mRNAs and, together with other initiation factors, stimulates binding of mRNA and methionyl-tRNAi to the 40S ribosome. The eIF-3 complex specifically targets and initiates translation of a subset of mRNAs involved in cell proliferation. The polypeptide is Eukaryotic translation initiation factor 3 subunit H (Anopheles gambiae (African malaria mosquito)).